The primary structure comprises 159 residues: Ribosomal RNA large subunit methyltransferase H (159 aa).

S-adenosyl-L-methionine is bound by residues Leu76, Gly107, and 126–131 (LSSLTL).

Belongs to the RNA methyltransferase RlmH family. Homodimer.

Its subcellular location is the cytoplasm. The enzyme catalyses pseudouridine(1915) in 23S rRNA + S-adenosyl-L-methionine = N(3)-methylpseudouridine(1915) in 23S rRNA + S-adenosyl-L-homocysteine + H(+). Functionally, specifically methylates the pseudouridine at position 1915 (m3Psi1915) in 23S rRNA. The polypeptide is Ribosomal RNA large subunit methyltransferase H (Cupriavidus pinatubonensis (strain JMP 134 / LMG 1197) (Cupriavidus necator (strain JMP 134))).